The following is a 166-amino-acid chain: Nucleotide-binding protein CV_2047 (166 aa).

It belongs to the YajQ family.

In terms of biological role, nucleotide-binding protein. The polypeptide is Nucleotide-binding protein CV_2047 (Chromobacterium violaceum (strain ATCC 12472 / DSM 30191 / JCM 1249 / CCUG 213 / NBRC 12614 / NCIMB 9131 / NCTC 9757 / MK)).